The following is a 324-amino-acid chain: Lignin-forming anionic peroxidase (324 aa).

A signal peptide spans 1-22; sequence MSFLRFVGAILFLVAIFGASNA. Pyrrolidone carboxylic acid is present on Gln-23. Cystine bridges form between Cys-33–Cys-111, Cys-66–Cys-71, Cys-117–Cys-320, and Cys-196–Cys-228. Asn-35 is a glycosylation site (N-linked (GlcNAc...) asparagine). His-64 functions as the Proton acceptor in the catalytic mechanism. 5 residues coordinate Ca(2+): Asp-65, Val-68, Gly-70, Asp-72, and Ser-74. A glycan (N-linked (GlcNAc...) asparagine) is linked at Asn-150. Pro-159 is a substrate binding site. Heme b is bound at residue His-189. A Ca(2+)-binding site is contributed by Thr-190. A glycan (N-linked (GlcNAc...) asparagine) is linked at Asn-207. Ca(2+) contacts are provided by Asp-242, Thr-245, and Asp-250.

This sequence belongs to the peroxidase family. Classical plant (class III) peroxidase subfamily. Ca(2+) serves as cofactor. Heme b is required as a cofactor.

It is found in the secreted. The catalysed reaction is 2 a phenolic donor + H2O2 = 2 a phenolic radical donor + 2 H2O. In terms of biological role, removal of H(2)O(2), oxidation of toxic reductants, biosynthesis and degradation of lignin, suberization, auxin catabolism, response to environmental stresses such as wounding, pathogen attack and oxidative stress. These functions might be dependent on each isozyme/isoform in each plant tissue. Functionally, plays an integral role in secondary cell wall biosynthesis by the polymerization of cinnamyl alcohols into lignin and by forming rigid cross-links between cellulose, pectin, hydroxy-proline-rich glycoproteins, and lignin. The sequence is that of Lignin-forming anionic peroxidase from Nicotiana tabacum (Common tobacco).